We begin with the raw amino-acid sequence, 193 residues long: Oligoribonuclease (193 aa).

The region spanning 14-177 (LIWIDLEMTG…SDIYDSIAEL (164 aa)) is the Exonuclease domain. Y135 is an active-site residue.

The protein belongs to the oligoribonuclease family.

It is found in the cytoplasm. Functionally, 3'-to-5' exoribonuclease specific for small oligoribonucleotides. In Xylella fastidiosa (strain Temecula1 / ATCC 700964), this protein is Oligoribonuclease.